The sequence spans 267 residues: Interleukin-1 alpha (267 aa).

The propeptide occupies 1–112 (MAKVPDLFED…DPEEGIIKPR (112 aa)). Asn-64 carries an N-linked (GlcNAc...) asparagine glycan. The residue at position 82 (Lys-82) is an N6-acetyllysine. Residues 82–86 (KKRRL) are nuclear localization signal (NLS). At Ser-87 the chain carries Phosphoserine. Residues Asn-100 and Asn-141 are each glycosylated (N-linked (GlcNAc...) asparagine).

This sequence belongs to the IL-1 family. Monomer. Interacts with TMED10; the interaction mediates the translocation from the cytoplasm into the ERGIC (endoplasmic reticulum-Golgi intermediate compartment) and thereby secretion. Interacts with IL1R1. Interacts with S100A13; this interaction is the first step in the export of IL1A, followed by direct translocation of this complex across the plasma membrane. Acetylated within its nuclear localization sequence, which impacts subcellular localization. Post-translationally, proteolytic processed by CAPN1 in a calcium-dependent manner. Cleavage from 31 kDa precursor to 18 kDa biologically active molecules. In terms of processing, phosphorylated. Phosphorylation greatly enhances susceptibility to digestion and promotes the conversion of pre-IL1A alpha to the biologically active IL1A.

The protein resides in the nucleus. It is found in the cytoplasm. Its subcellular location is the secreted. Functionally, cytokine constitutively present intracellularly in nearly all resting non-hematopoietic cells that plays an important role in inflammation and bridges the innate and adaptive immune systems. After binding to its receptor IL1R1 together with its accessory protein IL1RAP, forms the high affinity interleukin-1 receptor complex. Signaling involves the recruitment of adapter molecules such as MYD88, IRAK1 or IRAK4. In turn, mediates the activation of NF-kappa-B and the three MAPK pathways p38, p42/p44 and JNK pathways. Within the cell, acts as an alarmin and cell death results in its liberation in the extracellular space after disruption of the cell membrane to induce inflammation and alert the host to injury or damage. In addition to its role as a danger signal, which occurs when the cytokine is passively released by cell necrosis, directly senses DNA damage and acts as signal for genotoxic stress without loss of cell integrity. This chain is Interleukin-1 alpha (IL1A), found in Oryctolagus cuniculus (Rabbit).